We begin with the raw amino-acid sequence, 640 residues long: 1-deoxy-D-xylulose-5-phosphate synthase (640 aa).

Residues histidine 79 and 120–122 (GHS) contribute to the thiamine diphosphate site. Mg(2+) is bound at residue aspartate 151. Thiamine diphosphate is bound by residues 152–153 (GA), asparagine 180, tyrosine 287, and glutamate 369. Residue asparagine 180 coordinates Mg(2+).

The protein belongs to the transketolase family. DXPS subfamily. Homodimer. Mg(2+) is required as a cofactor. It depends on thiamine diphosphate as a cofactor.

The enzyme catalyses D-glyceraldehyde 3-phosphate + pyruvate + H(+) = 1-deoxy-D-xylulose 5-phosphate + CO2. The protein operates within metabolic intermediate biosynthesis; 1-deoxy-D-xylulose 5-phosphate biosynthesis; 1-deoxy-D-xylulose 5-phosphate from D-glyceraldehyde 3-phosphate and pyruvate: step 1/1. Its function is as follows. Catalyzes the acyloin condensation reaction between C atoms 2 and 3 of pyruvate and glyceraldehyde 3-phosphate to yield 1-deoxy-D-xylulose-5-phosphate (DXP). The polypeptide is 1-deoxy-D-xylulose-5-phosphate synthase (Thioalkalivibrio sulfidiphilus (strain HL-EbGR7)).